A 274-amino-acid chain; its full sequence is 2,3,4,5-tetrahydropyridine-2,6-dicarboxylate N-succinyltransferase (274 aa).

Substrate-binding residues include Arg103 and Asp140.

Belongs to the transferase hexapeptide repeat family. Homotrimer.

The protein resides in the cytoplasm. It carries out the reaction (S)-2,3,4,5-tetrahydrodipicolinate + succinyl-CoA + H2O = (S)-2-succinylamino-6-oxoheptanedioate + CoA. It participates in amino-acid biosynthesis; L-lysine biosynthesis via DAP pathway; LL-2,6-diaminopimelate from (S)-tetrahydrodipicolinate (succinylase route): step 1/3. This is 2,3,4,5-tetrahydropyridine-2,6-dicarboxylate N-succinyltransferase from Actinobacillus pleuropneumoniae serotype 5b (strain L20).